Here is a 273-residue protein sequence, read N- to C-terminus: NAD-dependent protein deacylase (273 aa).

The Deacetylase sirtuin-type domain occupies 20–272; it reads RERLRQRIFF…PEFVEKLLKG (253 aa). 48 to 67 serves as a coordination point for NAD(+); the sequence is GAGISAESGIRTFRAADGLW. Residues tyrosine 92 and arginine 95 each coordinate substrate. NAD(+) is bound at residue 129–132; it reads QNID. The active-site Proton acceptor is the histidine 147. Cysteine 155 and cysteine 174 together coordinate Zn(2+). NAD(+)-binding positions include 214–216, 240–242, and alanine 258; these read GTS and NLE.

Belongs to the sirtuin family. Class III subfamily. Zn(2+) is required as a cofactor.

Its subcellular location is the cytoplasm. It catalyses the reaction N(6)-acetyl-L-lysyl-[protein] + NAD(+) + H2O = 2''-O-acetyl-ADP-D-ribose + nicotinamide + L-lysyl-[protein]. The enzyme catalyses N(6)-succinyl-L-lysyl-[protein] + NAD(+) + H2O = 2''-O-succinyl-ADP-D-ribose + nicotinamide + L-lysyl-[protein]. It carries out the reaction N(6)-(2-hydroxyisobutanoyl)-L-lysyl-[protein] + NAD(+) + H2O = 2''-O-(2-hydroxyisobutanoyl)-ADP-D-ribose + nicotinamide + L-lysyl-[protein]. NAD-dependent lysine deacetylase that specifically removes acetyl groups on target proteins. Also acts as a protein-lysine deacylase by mediating protein desuccinylation and de-2-hydroxyisobutyrylation. Modulates the activities of several proteins which are inactive in their acylated form. This chain is NAD-dependent protein deacylase, found in Escherichia coli O6:H1 (strain CFT073 / ATCC 700928 / UPEC).